The primary structure comprises 60 residues: Cecropin-B type 1 (60 aa).

Residues 1-24 (MNFNKLFALVLLIGLVLLTGQTEA) form the signal peptide. Residue I58 is modified to Isoleucine amide.

The protein belongs to the cecropin family.

It localises to the secreted. Its function is as follows. Cecropins have lytic and antibacterial activity against several Gram-positive and Gram-negative bacteria. This Aedes albopictus (Asian tiger mosquito) protein is Cecropin-B type 1 (CECB1).